The chain runs to 706 residues: Ribosomal RNA large subunit methyltransferase K/L (706 aa).

The 112-residue stretch at 43 to 154 (LMYQSLLWSR…RDMASVALDL (112 aa)) folds into the THUMP domain.

The protein belongs to the methyltransferase superfamily. RlmKL family.

The protein resides in the cytoplasm. The enzyme catalyses guanosine(2445) in 23S rRNA + S-adenosyl-L-methionine = N(2)-methylguanosine(2445) in 23S rRNA + S-adenosyl-L-homocysteine + H(+). It carries out the reaction guanosine(2069) in 23S rRNA + S-adenosyl-L-methionine = N(2)-methylguanosine(2069) in 23S rRNA + S-adenosyl-L-homocysteine + H(+). Its function is as follows. Specifically methylates the guanine in position 2445 (m2G2445) and the guanine in position 2069 (m7G2069) of 23S rRNA. The sequence is that of Ribosomal RNA large subunit methyltransferase K/L from Yersinia enterocolitica serotype O:8 / biotype 1B (strain NCTC 13174 / 8081).